A 170-amino-acid polypeptide reads, in one-letter code: uncharacterized protein (170 aa).

The N-acetyltransferase domain maps to 8-167 (LLIREFEFKD…DEYYYAILEE (160 aa)).

Belongs to the acetyltransferase family.

This is an uncharacterized protein from Bacillus subtilis (strain 168).